A 347-amino-acid chain; its full sequence is Nod factor export ATP-binding protein I (347 aa).

Residues 1–11 (MGENMEREMLR) are compositionally biased toward basic and acidic residues. The tract at residues 1-32 (MGENMEREMLRPKTIAMDQNSASARSNPEREI) is disordered. The segment covering 17–26 (MDQNSASARS) has biased composition (polar residues). The region spanning 49 to 279 (IDLQAVTMIY…IIGCPVIEVY (231 aa)) is the ABC transporter domain. Residue 81–88 (GPNGAGKS) coordinates ATP.

This sequence belongs to the ABC transporter superfamily. Lipooligosaccharide exporter (TC 3.A.1.102) family. As to quaternary structure, the complex is composed of two ATP-binding proteins (NodI) and two transmembrane proteins (NodJ).

The protein localises to the cell inner membrane. In terms of biological role, part of the ABC transporter complex NodIJ involved in the export of the nodulation factors (Nod factors), the bacterial signal molecules that induce symbiosis and subsequent nodulation induction. Nod factors are LCO (lipo-chitin oligosaccharide), a modified beta-1,4-linked N-acetylglucosamine oligosaccharide. This subunit is responsible for energy coupling to the transport system. The chain is Nod factor export ATP-binding protein I from Neorhizobium galegae (Rhizobium galegae).